Consider the following 256-residue polypeptide: Metallo-beta-lactamase type 2 (256 aa).

A signal peptide spans 1–29 (MKNTLLKLGVCVSLLGITPFVSTISSVQA). Zn(2+) is bound by residues H115, H117, D119, H178, and C197. Substrate-binding residues include K200 and N209. H239 contributes to the Zn(2+) binding site.

This sequence belongs to the metallo-beta-lactamase superfamily. Class-B beta-lactamase family. As to quaternary structure, monomer. Zn(2+) serves as cofactor.

It is found in the periplasm. It carries out the reaction a beta-lactam + H2O = a substituted beta-amino acid. With respect to regulation, inhibited by chelating agents such as EDTA. In terms of biological role, confers resistance to the different beta-lactams antibiotics (penicillin, cephalosporin and carbapenem) via the hydrolysis of the beta-lactam ring. Benzylpenicillin is a better substrate than cephalosporin C and ampicillin. This chain is Metallo-beta-lactamase type 2, found in Bacillus cereus.